A 163-amino-acid polypeptide reads, in one-letter code: Photosystem II extrinsic protein V (163 aa).

An N-terminal signal peptide occupies residues 1–26; that stretch reads MFKTYSKSFACILFCIFNIFVVSASA. Heme c contacts are provided by C63, C66, H67, and M130.

Belongs to the cytochrome c family. PsbV subfamily. As to quaternary structure, PSII is composed of 1 copy each of membrane proteins PsbA, PsbB, PsbC, PsbD, PsbE, PsbF, PsbH, PsbI, PsbJ, PsbK, PsbL, PsbM, PsbT, PsbY, PsbZ, Psb30/Ycf12, at least 3 peripheral proteins of the oxygen-evolving complex and a large number of cofactors. It forms dimeric complexes. Heme c is required as a cofactor.

It localises to the plastid. The protein localises to the chloroplast thylakoid membrane. Functionally, one of the extrinsic, lumenal subunits of photosystem II (PSII). PSII is a light-driven water plastoquinone oxidoreductase, using light energy to abstract electrons from H(2)O, generating a proton gradient subsequently used for ATP formation. The extrinsic proteins stabilize the structure of photosystem II oxygen-evolving complex (OEC), the ion environment of oxygen evolution and protect the OEC against heat-induced inactivation. The sequence is that of Photosystem II extrinsic protein V from Thalassiosira pseudonana (Marine diatom).